The primary structure comprises 226 residues: Glutathione S-transferase kappa 1 (226 aa).

16–18 (SPY) is a binding site for glutathione. N6-succinyllysine occurs at positions 36 and 49. Asparagine 53 lines the glutathione pocket. 2 positions are modified to N6-acetyllysine; alternate: lysine 68 and lysine 74. N6-succinyllysine; alternate occurs at positions 68 and 74. Lysine 85 carries the post-translational modification N6-acetyllysine. N6-acetyllysine; alternate is present on residues lysine 93 and lysine 116. N6-succinyllysine; alternate is present on residues lysine 93 and lysine 116. An N6-succinyllysine modification is found at lysine 144. Lysine 158 bears the N6-acetyllysine; alternate mark. The residue at position 158 (lysine 158) is an N6-succinyllysine; alternate. Lysine 165 bears the N6-acetyllysine mark. An N6-acetyllysine; alternate mark is found at lysine 167 and lysine 177. 2 positions are modified to N6-succinyllysine; alternate: lysine 167 and lysine 177. Leucine 183 lines the glutathione pocket. Lysine 193 is modified (N6-succinyllysine). Residue 200-201 (SD) coordinates glutathione.

This sequence belongs to the GST superfamily. Kappa family. In terms of assembly, homodimer.

It localises to the mitochondrion matrix. It carries out the reaction RX + glutathione = an S-substituted glutathione + a halide anion + H(+). Glutathione S-transferase that catalyzes the conjugation of glutathione to exogenous and endogenous compounds. This is Glutathione S-transferase kappa 1 (Gstk1) from Rattus norvegicus (Rat).